Here is a 95-residue protein sequence, read N- to C-terminus: Putative regulatory protein STH1338 (95 aa).

The protein belongs to the RemA family.

The chain is Putative regulatory protein STH1338 from Symbiobacterium thermophilum (strain DSM 24528 / JCM 14929 / IAM 14863 / T).